Consider the following 140-residue polypeptide: MAVTRTFSIIKPDATKRNLTGAVTKMLEEAGLRVVASKRIRMSREQAEGFYAVHKERPFFGELVDFMMSEPVVVQVLEGEDAVKRNRDVMGATNPAEAAEGTIRKEYALSIGENTVHGSDSEENAKIEIDFFFDEDEIVG.

Positions 11, 59, 87, 93, 104, and 114 each coordinate ATP. His-117 acts as the Pros-phosphohistidine intermediate in catalysis.

Belongs to the NDK family. In terms of assembly, homotetramer. It depends on Mg(2+) as a cofactor.

It localises to the cytoplasm. The enzyme catalyses a 2'-deoxyribonucleoside 5'-diphosphate + ATP = a 2'-deoxyribonucleoside 5'-triphosphate + ADP. It catalyses the reaction a ribonucleoside 5'-diphosphate + ATP = a ribonucleoside 5'-triphosphate + ADP. Its function is as follows. Major role in the synthesis of nucleoside triphosphates other than ATP. The ATP gamma phosphate is transferred to the NDP beta phosphate via a ping-pong mechanism, using a phosphorylated active-site intermediate. This Erythrobacter litoralis (strain HTCC2594) protein is Nucleoside diphosphate kinase.